Here is a 253-residue protein sequence, read N- to C-terminus: L-cysteine S-thiosulfotransferase subunit SoxA (253 aa).

A signal peptide spans 1–17; it reads MGKWVTIIFVLFLYAIA. The Cytochrome c domain occupies 44 to 129; the sequence is VYAEQGRDMF…SIATYVATLS (86 aa). Heme c is bound by residues C64, C67, H68, C102, C165, C168, and H169. R210 provides a ligand contact to substrate. C214 is a binding site for heme c. C214 acts as the Cysteine persulfide intermediate in catalysis.

It belongs to the SoxA family. Heterodimer of SoxA and SoxX. The cofactor is heme c. In terms of processing, cysteine persulfide at Cys-214.

The protein localises to the periplasm. The enzyme catalyses L-cysteinyl-[SoxY protein] + thiosulfate + 2 Fe(III)-[cytochrome c] = S-sulfosulfanyl-L-cysteinyl-[SoxY protein] + 2 Fe(II)-[cytochrome c] + 2 H(+). The catalysed reaction is S-sulfanyl-L-cysteinyl-[SoxY protein] + thiosulfate + 2 Fe(III)-[cytochrome c] = S-(2-sulfodisulfanyl)-L-cysteinyl-[SoxY protein] + 2 Fe(II)-[cytochrome c] + 2 H(+). C-type diheme cytochrome, which is part of the SoxAX cytochrome complex involved in sulfur oxidation. The SoxAX complex catalyzes the formation of a heterodisulfide bond between the conserved cysteine residue on a sulfur carrier SoxYZ complex subunit SoxY and thiosulfate or other inorganic sulfur substrates. This leads to the liberation of two electrons, which may be transferred from the SoxAX complex to another cytochrome c that then channels them into the respiratory electron transport chain. Some electrons may be used for reductive CO(2) fixation. The sequence is that of L-cysteine S-thiosulfotransferase subunit SoxA from Hydrogenobacter thermophilus (strain DSM 6534 / IAM 12695 / TK-6).